A 448-amino-acid polypeptide reads, in one-letter code: L-seryl-tRNA(Sec) selenium transferase (448 aa).

At Lys-284 the chain carries N6-(pyridoxal phosphate)lysine.

This sequence belongs to the SelA family. The cofactor is pyridoxal 5'-phosphate.

The protein localises to the cytoplasm. It carries out the reaction L-seryl-tRNA(Sec) + selenophosphate + H(+) = L-selenocysteinyl-tRNA(Sec) + phosphate. The protein operates within aminoacyl-tRNA biosynthesis; selenocysteinyl-tRNA(Sec) biosynthesis; selenocysteinyl-tRNA(Sec) from L-seryl-tRNA(Sec) (bacterial route): step 1/1. Functionally, converts seryl-tRNA(Sec) to selenocysteinyl-tRNA(Sec) required for selenoprotein biosynthesis. The chain is L-seryl-tRNA(Sec) selenium transferase from Nautilia profundicola (strain ATCC BAA-1463 / DSM 18972 / AmH).